We begin with the raw amino-acid sequence, 400 residues long: Leukosialin (400 aa).

The signal sequence occupies residues 1 to 19 (MATLLLLLGVLVVSPDALG). Over 20–253 (STTAVQTPTS…PFRNPDENSR (234 aa)) the chain is Extracellular. Residues T21, T22, T26, and T28 are each glycosylated (O-linked (GalNAc...) threonine). Polar residues-rich tracts occupy residues 21-51 (TTAVQTPTSGEPLVSTSEPLSSKMYTTSITS) and 58-112 (TGDQ…TPHA). The disordered stretch occupies residues 21–224 (TTAVQTPTSG…SSGASGPQVS (204 aa)). Residues S29 and S35 are each glycosylated (O-linked (GalNAc...) serine). The O-linked (GalNAc...) threonine glycan is linked to T36. S37, S41, and S42 each carry an O-linked (GalNAc...) serine glycan. T46 and T47 each carry an O-linked (GalNAc...) threonine glycan. S48 is a glycosylation site (O-linked (GalNAc...) serine). Residues T50, T58, and T69 are each glycosylated (O-linked (GalNAc...) threonine). 2 O-linked (GalNAc...) serine glycosylation sites follow: S99 and S103. T109 and T113 each carry an O-linked (GalNAc...) threonine glycan. O-linked (GalNAc...) serine glycosylation is present at S114. Polar residues-rich tracts occupy residues 121–164 (TANS…SRGT) and 172–182 (ATVSLETSKGT). O-linked (GalNAc...) threonine glycans are attached at residues T136, T137, T173, and T178. Low complexity predominate over residues 196-211 (TSTGTTGPPVTMTTGS). Residues 212–224 (LEPSSGASGPQVS) are compositionally biased toward polar residues. An N-linked (GlcNAc...) asparagine glycan is attached at N239. A helical transmembrane segment spans residues 254 to 276 (GMLPVAVLVALLAVIVLVALLLL). Residues 277 to 400 (WRRRQKRRTG…EPEGGDGAAP (124 aa)) are Cytoplasmic-facing. The tract at residues 278–308 (RRRQKRRTGALVLSRGGKRNGVVDAWAGPAQ) is required for interaction with EZR, MSN and RDX and for co-localization to microvilli. The Nuclear localization signal motif lies at 282-296 (KRRTGALVLSRGGKR). S291 carries the post-translational modification Phosphoserine. The span at 320–332 (GGSGGDKGSGFPD) shows a compositional bias: gly residues. The segment at 320 to 400 (GGSGGDKGSG…EPEGGDGAAP (81 aa)) is disordered. At S336 the chain carries Phosphoserine. A Phosphothreonine modification is found at T341. S351 carries the phosphoserine modification. S355 carries the phosphoserine; by PKC/PRKCQ modification. 2 positions are modified to phosphoserine: S368 and S379.

As to quaternary structure, interacts with SIGLEC1. Monomer. Interacts with CTNNB1. Interacts with RDX (via FERM domain), EZR and MSN. Post-translationally, glycosylated; has a high content of sialic acid and O-linked carbohydrate structures. In terms of processing, phosphorylation at Ser-355 is regulated by chemokines, requires its association with ERM proteins (EZR, RDX and MSN) and is essential for its function in the regulation of T-cell trafficking to lymph nodes. Has a high content of sialic acid and O-linked carbohydrate structures. Post-translationally, cleavage by CTSG releases its extracellular domain and triggers its intramembrane proteolysis by gamma-secretase releasing the CD43 cytoplasmic tail chain (CD43-ct) which translocates to the nucleus. In terms of processing, sumoylated. Cell surface of thymocytes, T-lymphocytes, neutrophils, plasma cells and myelomas.

The protein localises to the membrane. The protein resides in the cell projection. It is found in the microvillus. It localises to the uropodium. Its subcellular location is the nucleus. The protein localises to the PML body. In terms of biological role, predominant cell surface sialoprotein of leukocytes which regulates multiple T-cell functions, including T-cell activation, proliferation, differentiation, trafficking and migration. Positively regulates T-cell trafficking to lymph-nodes via its association with ERM proteins (EZR, RDX and MSN). Negatively regulates Th2 cell differentiation and predisposes the differentiation of T-cells towards a Th1 lineage commitment. Promotes the expression of IFN-gamma by T-cells during T-cell receptor (TCR) activation of naive cells and induces the expression of IFN-gamma by CD4(+) T-cells and to a lesser extent by CD8(+) T-cells. Plays a role in preparing T-cells for cytokine sensing and differentiation into effector cells by inducing the expression of cytokine receptors IFNGR and IL4R, promoting IFNGR and IL4R signaling and by mediating the clustering of IFNGR with TCR. Acts as a major E-selectin ligand responsible for Th17 cell rolling on activated vasculature and recruitment during inflammation. Mediates Th17 cells, but not Th1 cells, adhesion to E-selectin. Acts as a T-cell counter-receptor for SIGLEC1. Functionally, protects cells from apoptotic signals, promoting cell survival. This is Leukosialin (SPN) from Homo sapiens (Human).